The sequence spans 201 residues: Recombination protein RecR (201 aa).

A C4-type zinc finger spans residues 57 to 72 (CADCRTFTEQEHCTIC). The 96-residue stretch at 81–176 (GQICVVESPA…LASRIAHGVP (96 aa)) folds into the Toprim domain.

Belongs to the RecR family.

Its function is as follows. May play a role in DNA repair. It seems to be involved in an RecBC-independent recombinational process of DNA repair. It may act with RecF and RecO. The sequence is that of Recombination protein RecR from Yersinia enterocolitica serotype O:8 / biotype 1B (strain NCTC 13174 / 8081).